Reading from the N-terminus, the 389-residue chain is Terminal nucleotidyltransferase 5D (389 aa).

It belongs to the TENT family. As to expression, restricted to testis.

It catalyses the reaction RNA(n) + ATP = RNA(n)-3'-adenine ribonucleotide + diphosphate. Catalyzes the transfer of one adenosine molecule from an ATP to an mRNA poly(A) tail bearing a 3'-OH terminal group. The polypeptide is Terminal nucleotidyltransferase 5D (Homo sapiens (Human)).